The sequence spans 435 residues: Probable protein arginine N-methyltransferase 6 (435 aa).

A disordered region spans residues 1-48 (MQSGGDFSNGFHGDHHRELELEDKQGPSLSSFGRAKKRSHAGARDPRG). Residues 12–25 (HGDHHRELELEDKQ) are compositionally biased toward basic and acidic residues. Positions 80-418 (DVAYFHSYAH…KENKRFMNIH (339 aa)) constitute an SAM-dependent MTase PRMT-type domain. Residues H93, R102, G126, D148, and E177 each coordinate S-adenosyl-L-methionine. Catalysis depends on residues E191 and E200. The tract at residues 333-377 (PAKNTSETSIASGSSSISPSGEVNQKKRTNPSDALVLSTSPESPP) is disordered. Low complexity predominate over residues 337–354 (TSETSIASGSSSISPSGE).

The protein belongs to the class I-like SAM-binding methyltransferase superfamily. Protein arginine N-methyltransferase family. PRMT6 subfamily.

Arginine methyltransferase that can both catalyze the formation of omega-N monomethylarginine (MMA) and asymmetrical dimethylarginine (aDMA). This Arabidopsis thaliana (Mouse-ear cress) protein is Probable protein arginine N-methyltransferase 6 (PRMT6).